Consider the following 494-residue polypeptide: Flavin-containing monooxygenase ustF2 (494 aa).

An N-terminal signal peptide occupies residues 1–21 (MANPQTTRVAVVGAGISGVLA). Residue 13-18 (GAGISG) coordinates FAD. The disordered stretch occupies residues 73–93 (EPSYPAMKPSKADPPATNEQE). NADP(+) is bound at residue 250–255 (GGGVSS). N-linked (GlcNAc...) asparagine glycosylation is present at Asn459.

This sequence belongs to the FMO family.

The protein operates within mycotoxin biosynthesis. In terms of biological role, flavin-containing monooxygenase; part of the gene cluster that mediates the biosynthesis of the secondary metabolite ustiloxin B, an antimitotic tetrapeptide. First, ustA is processed by the subtilisin-like endoprotease Kex2 that is outside the ustiloxin B gene cluster, at the C-terminal side of Arg-Lys, after transfer to Golgi apparatus through the endoplasmic reticulum (ER). Cleavage by KEX2 generates 16 peptides YAIG-I to YAIG-XVI. To process the precursor peptide further, at least two peptidases are necessary to cleave the N-terminal and C-terminal sides of the Tyr-Ala-Ile-Gly core peptide which serves as backbone for the synthesis of ustiloxin B, through cyclization and modification of the tyrosine with a non-protein coding amino acid, norvaline. One of the two peptidases must be the serine peptidase ustP; and the other pepdidase is probably ustH. Macrocyclization of the core peptide derived from ustA requires the tyrosinase ustQ, as well as the homologous oxidases ustYa and ustYb, and leads to the production of the first cyclization product N-desmethylustiloxin F. For the formation of N-desmethylustiloxin F, three oxidation steps are required, hydroxylation at the benzylic position, hydroxylation at either the aromatic ring of Tyr or beta-position of Ile, and oxidative cyclization. UstQ may catalyze the oxidation of a phenol moiety, whereas the ustYa and ustYb are most likely responsible for the remaining two-step oxidations. N-desmethylustiloxin F is then methylated by ustM to yield ustiloxin F which in turn substrate of the cytochrome P450 monooxygenase ustC which catalyzes the formation of S-deoxyustiloxin H. The flavoprotein monooxygenases ustF1 and ustF2 then participate in the modification of the side chain of S-deoxyustiloxin H, leading to the synthesis of an oxime intermediate, via ustiloxin H. Finally, carboxylative dehydration performed by the cysteine desulfurase-like protein ustD yields ustiloxin B. The chain is Flavin-containing monooxygenase ustF2 from Aspergillus flavus (strain ATCC 200026 / FGSC A1120 / IAM 13836 / NRRL 3357 / JCM 12722 / SRRC 167).